We begin with the raw amino-acid sequence, 234 residues long: Probable septum site-determining protein MinC (234 aa).

The protein belongs to the MinC family. Interacts with MinD and FtsZ.

Cell division inhibitor that blocks the formation of polar Z ring septums. Rapidly oscillates between the poles of the cell to destabilize FtsZ filaments that have formed before they mature into polar Z rings. Prevents FtsZ polymerization. The sequence is that of Probable septum site-determining protein MinC from Buchnera aphidicola subsp. Baizongia pistaciae (strain Bp).